We begin with the raw amino-acid sequence, 100 residues long: Small ribosomal subunit protein uS14 (100 aa).

The protein belongs to the universal ribosomal protein uS14 family. In terms of assembly, part of the 30S ribosomal subunit. Contacts proteins S3 and S10.

In terms of biological role, binds 16S rRNA, required for the assembly of 30S particles and may also be responsible for determining the conformation of the 16S rRNA at the A site. This Synechocystis sp. (strain ATCC 27184 / PCC 6803 / Kazusa) protein is Small ribosomal subunit protein uS14.